The primary structure comprises 142 residues: DNA-directed RNA polymerases I, II, and III subunit rpabc3 (142 aa).

Residues 16 to 40 (DPDGKKFDRVSRFVCYSENYEMDLQ) form a non-specific ssDNA binding region.

This sequence belongs to the eukaryotic RPB8 RNA polymerase subunit family. Component of the RNA polymerase I (Pol I), RNA polymerase II (Pol II) and RNA polymerase III (Pol III) complexes consisting of at least 13, 12 and 17 subunits, respectively. Directly interacts with POLR2A.

The protein localises to the nucleus. The protein resides in the nucleolus. DNA-dependent RNA polymerase catalyzes the transcription of DNA into RNA using the four ribonucleoside triphosphates as substrates. Common component of RNA polymerases I, II and III which synthesize ribosomal RNA precursors, mRNA precursors and many functional non-coding RNAs, and small RNAs, such as 5S rRNA and tRNAs, respectively. The polypeptide is DNA-directed RNA polymerases I, II, and III subunit rpabc3 (polr2h) (Dictyostelium discoideum (Social amoeba)).